The chain runs to 357 residues: MSDTKNLNHDRQKALDNAISQIEKAFGRGAIMKLKQGAIEKIDSIPTGSIALDTALGIGGFPKGRIIEIFGPESSGKTTLALHVIAESQKKGGNCAFIDAEHALDIMYARKLGVNTGDLIVSQPDTGEQALHIVEYLICSGAIDVIVVDSVAALTPRAEIEGDMGDQHMGLQARLLSHALRKLTSIVSKANCILIFINQIRMKIGVVYGNPETTTGGNALKFYSSVRLDIRKVSAIKDKDVIIGNQTKVKVVKNKVAPPFKQVDFDIMYNEGISKVGEIIDMGVKLNIVEKAGSYYSYNSVRLGQGKENAKLYLKNNPSTADEIEQKIRASLQASDNDVSCFNAEVDSISDMDVPVF.

Glycine 71–threonine 78 contacts ATP.

It belongs to the RecA family.

The protein resides in the cytoplasm. In terms of biological role, can catalyze the hydrolysis of ATP in the presence of single-stranded DNA, the ATP-dependent uptake of single-stranded DNA by duplex DNA, and the ATP-dependent hybridization of homologous single-stranded DNAs. It interacts with LexA causing its activation and leading to its autocatalytic cleavage. This chain is Protein RecA, found in Ehrlichia ruminantium (strain Gardel).